Here is an 870-residue protein sequence, read N- to C-terminus: DNA mismatch repair protein MutS (870 aa).

621–628 (GPNMAGKS) lines the ATP pocket. Positions 813–834 (GAPRIAKSRRQRTPDPSPQFSL) are disordered.

It belongs to the DNA mismatch repair MutS family.

This protein is involved in the repair of mismatches in DNA. It is possible that it carries out the mismatch recognition step. This protein has a weak ATPase activity. This chain is DNA mismatch repair protein MutS, found in Pelobacter propionicus (strain DSM 2379 / NBRC 103807 / OttBd1).